The chain runs to 180 residues: Cytidylate kinase (180 aa).

7-15 (GPPGSGKST) is an ATP binding site.

This sequence belongs to the cytidylate kinase family. Type 2 subfamily.

The protein localises to the cytoplasm. It catalyses the reaction CMP + ATP = CDP + ADP. It carries out the reaction dCMP + ATP = dCDP + ADP. This chain is Cytidylate kinase, found in Sulfurisphaera tokodaii (strain DSM 16993 / JCM 10545 / NBRC 100140 / 7) (Sulfolobus tokodaii).